Here is a 162-residue protein sequence, read N- to C-terminus: E3 ubiquitin-protein ligase LAP (162 aa).

Residues 1–78 (MEGSDNTNTH…RWKCSFMYCN (78 aa)) are Cytoplasmic-facing. An RING-CH-type zinc finger spans residues 3–61 (GSDNTNTHCWICKDEYNVSTNFCNCKNEFKIVHKNCLEEWINFSHNTKCKICNGKYNIK). Cys-11, Cys-14, Cys-25, Cys-27, His-35, Cys-38, Cys-51, and Cys-54 together coordinate Zn(2+). Residues 79–99 (VPAICVSLICLLLLPLTILLV) form a helical membrane-spanning segment. The Lumenal portion of the chain corresponds to 100–121 (KFNLKSMLENIENRDLIALISA). Residues 122-142 (MAYSLPCVVGFITVVHILIAL) form a helical membrane-spanning segment. Topologically, residues 143–162 (YDYYLAAKSDNTTYQVYEYI) are cytoplasmic.

It belongs to the poxviridae LAP protein family.

The protein resides in the host membrane. It is found in the host Golgi apparatus. Its subcellular location is the host trans-Golgi network membrane. The protein localises to the host early endosome membrane. The catalysed reaction is S-ubiquitinyl-[E2 ubiquitin-conjugating enzyme]-L-cysteine + [acceptor protein]-L-lysine = [E2 ubiquitin-conjugating enzyme]-L-cysteine + N(6)-ubiquitinyl-[acceptor protein]-L-lysine.. E3 ubiquitin-protein ligase which promotes ubiquitination and subsequent degradation of host MHC-I and CD4 molecules, presumably to prevent lysis of infected cells by cytotoxic T-lymphocytes and NK cell. Binds target molecules through transmembrane interaction. The result of this ubiquitination is the enhancement of the endocytosis of the target chain and the delivery to the lysosome, where it is proteolytically destroyed. The protein is E3 ubiquitin-protein ligase LAP (LW010) of Lumpy skin disease virus (LSDV).